Consider the following 793-residue polypeptide: Potassium transporter 18 (793 aa).

The Cytoplasmic segment spans residues 1–53; the sequence is METRTNEYSRKGAMWELERNLDQPMDAEAGRLRNMYREKTYPTILLLRLAFQS. A helical membrane pass occupies residues 54–74; it reads LGVVFGDLGTSPLYVFYNIFP. Topologically, residues 75–86 are extracellular; the sequence is HGIEDTEQVIGA. Residues 87–107 traverse the membrane as a helical segment; the sequence is LSLIIYSLTLIPLVKYVFIVL. The Cytoplasmic portion of the chain corresponds to 108–172; sequence RANDNGQGGT…WLEGHQFRKN (65 aa). A helical transmembrane segment spans residues 173–193; sequence LILILVLFGTCMAVGDGILTP. Residues 194-214 lie on the Extracellular side of the membrane; the sequence is AISVLSATGGIQVEEGRMRND. The helical transmembrane segment at 215-235 threads the bilayer; the sequence is VVVIISVLILIGLFSMQHYGT. Topologically, residues 236–237 are cytoplasmic; sequence DK. The helical transmembrane segment at 238 to 258 threads the bilayer; the sequence is VSWLFAPIVFVWFILIGILGA. Residues 259–287 are Extracellular-facing; it reads VNICKYDHSVLKAFNPVYVYRYFKRGKTS. A helical membrane pass occupies residues 288–308; it reads WTSLGGIMLSITGTEALFADL. Residue serine 309 is a topological domain, cytoplasmic. A helical membrane pass occupies residues 310 to 330; sequence YFPVQAIQIAFTVVVFPCLLL. Over 331–351 the chain is Extracellular; that stretch reads QYTGQAAFIAANTNQVSHAFY. Residues 352–372 form a helical membrane-spanning segment; that stretch reads ISLPAPILWPAFAVATAAAIV. The Cytoplasmic segment spans residues 373–409; the sequence is ASQATISATYSIIKQALALGCFPRVKIIHTSKKYLGQ. A helical transmembrane segment spans residues 410-430; sequence IYSPDINWILMVFCIAVTAGF. Topologically, residues 431-442 are extracellular; it reads KNQSQIANAYGT. A glycan (N-linked (GlcNAc...) asparagine) is linked at asparagine 432. A helical membrane pass occupies residues 443–463; the sequence is AVIMVMLVTTFLMIPIMLLVW. Residues 464–468 lie on the Cytoplasmic side of the membrane; sequence RSHWT. A helical membrane pass occupies residues 469–489; it reads LVVAFTVLSLLVEIPYFSAVV. At 490–494 the chain is on the extracellular side; it reads RKIDQ. A helical transmembrane segment spans residues 495 to 515; it reads GGWVPLVFAAGFMIIMYVWHY. Over 516–793 the chain is Cytoplasmic; that stretch reads GTLKRYEFEM…MLNVGQVFYV (278 aa).

Belongs to the HAK/KUP transporter (TC 2.A.72.3) family.

It is found in the membrane. Its function is as follows. High-affinity potassium transporter. This is Potassium transporter 18 (HAK18) from Oryza sativa subsp. japonica (Rice).